We begin with the raw amino-acid sequence, 160 residues long: Zinc finger A20 and AN1 domain-containing stress-associated protein 6 (160 aa).

The segment at 18–52 (PEAPILCVNNCGFFGSRMTENMCSKCYRDTVKAKT) adopts an A20-type zinc-finger fold. Zn(2+) is bound by residues C24, C28, C40, and C43. Residues 73–94 (EVTDGGSGSVADGKQVMEEDTP) are disordered. The AN1-type zinc-finger motif lies at 95-141 (KPPSNRCLSCRKKVGLTGFKCRCGGTFCSMHRYADSHKCTFDYKQVG). Zn(2+)-binding residues include C101, C104, C115, C117, C122, H125, H131, and C133.

Functionally, may be involved in environmental stress response. This chain is Zinc finger A20 and AN1 domain-containing stress-associated protein 6 (SAP6), found in Oryza sativa subsp. japonica (Rice).